A 2149-amino-acid polypeptide reads, in one-letter code: Serine/threonine-protein kinase WNK2 (2149 aa).

Over residues 1–10 the composition is skewed to basic and acidic residues; the sequence is MDGDGGRRDA. Disordered stretches follow at residues 1 to 75 and 87 to 183; these read MDGD…QRRV and ERAR…EDDL. Arginine 19 and arginine 30 each carry omega-N-methylarginine. Serine 45 carries the phosphoserine modification. Residues 95–114 show a composition bias toward pro residues; sequence APAPAAPAAPPGSPSVPSDP. Over residues 161 to 172 the composition is skewed to basic and acidic residues; that stretch reads AKPEPGRARKDE. Residues 173-182 are compositionally biased toward acidic residues; the sequence is PEEEEDDEDD. A Protein kinase domain is found at 195 to 453; it reads LKFDIELGRG…IKDLLSHAFF (259 aa). Residues serine 205, 275–278, and lysine 325 each bind ATP; that span reads TELM. Aspartate 342 acts as the Proton acceptor in catalysis. Serine 352 and serine 356 each carry phosphoserine; by autocatalysis. Serine 560 carries the post-translational modification Phosphoserine. Disordered regions lie at residues 578-630, 703-728, and 1067-1133; these read HAQS…DSQS, SMSF…APPV, and QEEQ…ERAS. Residues 605 to 625 are compositionally biased toward polar residues; the sequence is ASVTSLASDSTFDSGQGSTVY. The segment covering 709 to 728 has biased composition (pro residues); that stretch reads VLPPPSTPVPTGPSQPAPPV. A compositionally biased stretch (polar residues) spans 1081-1092; sequence QSSESFGGSDVT. Serine 1098 bears the Phosphoserine mark. Over residues 1115–1126 the composition is skewed to basic residues; it reads ARKHHRRSTRAR. Serine 1210 bears the Phosphoserine mark. Disordered regions lie at residues 1211-1234 and 1270-1502; these read EDTD…CGLA and PATD…GFVD. Low complexity-rich tracts occupy residues 1275 to 1292 and 1317 to 1353; these read SESS…EASQ and SQAG…STVP. The span at 1386 to 1400 shows a compositional bias: polar residues; that stretch reads RSAQCTAQPLSTGQG. Residues 1470-1485 are compositionally biased toward pro residues; the sequence is LPSPPLGPTAPPPPPS. A phosphoserine mark is found at serine 1507, serine 1566, and serine 1594. 2 disordered regions span residues 1521–1727 and 1739–1778; these read VPTS…PSSP and ASSI…GGVA. Polar residues predominate over residues 1553-1567; that stretch reads SDKTPSLTQQTQPSL. Over residues 1587–1597 the composition is skewed to low complexity; the sequence is SSPMTAESSSS. Over residues 1610–1629 the composition is skewed to polar residues; that stretch reads ASDSSTAPSVPQDASGSSVP. Phosphoserine is present on residues serine 1725, serine 1726, serine 1770, and serine 1797. The span at 1916 to 1928 shows a compositional bias: polar residues; the sequence is ASSTGHLSDSSRG. Positions 1916–1947 are disordered; it reads ASSTGHLSDSSRGPPTKDPRGTKAVQTQQPCS. Serine 1962 is subject to Phosphoserine. Over residues 2018 to 2031 the composition is skewed to polar residues; the sequence is SSLYDSPGSSTSSL. 2 disordered regions span residues 2018–2044 and 2122–2149; these read SSLY…PTLH and GPLS…EKPD. Residues 2122-2135 are compositionally biased toward low complexity; sequence GPLSTTATPGATPA.

This sequence belongs to the protein kinase superfamily. Ser/Thr protein kinase family. WNK subfamily. As to quaternary structure, forms a complex with the phosphorylated form of STK39 in the brain. The cofactor is Mg(2+). Autophosphorylated. Autophosphorylation at Ser-352 and Ser-356 promotes its activity. Brain and heart.

The protein resides in the cytoplasm. The protein localises to the cell membrane. The enzyme catalyses L-seryl-[protein] + ATP = O-phospho-L-seryl-[protein] + ADP + H(+). It catalyses the reaction L-threonyl-[protein] + ATP = O-phospho-L-threonyl-[protein] + ADP + H(+). With respect to regulation, activation requires autophosphorylation of Ser-356 and, to a lower extent, Ser-352. In terms of biological role, serine/threonine-protein kinase component of the WNK2-SPAK/OSR1 kinase cascade, which plays an important role in the regulation of electrolyte homeostasis, cell signaling, survival, and proliferation. The WNK2-SPAK/OSR1 kinase cascade is composed of WNK2, which mediates phosphorylation and activation of downstream kinases OXSR1/OSR1 and STK39/SPAK. Following activation, OXSR1/OSR1 and STK39/SPAK catalyze phosphorylation of ion cotransporters, regulating their activity. Acts as an activator and inhibitor of sodium-coupled chloride cotransporters and potassium-coupled chloride cotransporters respectively. Activates SLC12A2, SCNN1A, SCNN1B, SCNN1D and SGK1 and inhibits SLC12A5. Negatively regulates the EGF-induced activation of the ERK/MAPK-pathway and the downstream cell cycle progression. Affects MAPK3/MAPK1 activity by modulating the activity of MAP2K1 and this modulation depends on phosphorylation of MAP2K1 by PAK1. WNK2 acts by interfering with the activity of PAK1 by controlling the balance of the activity of upstream regulators of PAK1 activity, RHOA and RAC1, which display reciprocal activity. This Mus musculus (Mouse) protein is Serine/threonine-protein kinase WNK2.